Consider the following 1023-residue polypeptide: Sodium/potassium-transporting ATPase subunit alpha-1 (1023 aa).

Positions 1-5 (MGKGV) are excised as a propeptide. The span at 1-11 (MGKGVGRDKYE) shows a compositional bias: basic and acidic residues. The interval 1–38 (MGKGVGRDKYEPAAVSEHGDKKGKKAKKERDMDELKKE) is disordered. Topologically, residues 6 to 87 (GRDKYEPAAV…NALTPPPTTP (82 aa)) are cytoplasmic. K9 bears the N6-acetyllysine mark. Phosphotyrosine is present on Y10. At S16 the chain carries Phosphoserine; by PKC. An N6-acetyllysine modification is found at K21. Residues 28–38 (KERDMDELKKE) are compositionally biased toward basic and acidic residues. Phosphoserine is present on residues S40 and S47. Residues 82–84 (PPP) are phosphoinositide-3 kinase binding. Residues 88 to 108 (EWVKFCRQLFGGFSMLLWIGA) form a helical membrane-spanning segment. The Extracellular portion of the chain corresponds to 109-131 (ILCFLAYGILAATEEDFDNDNLY). A helical transmembrane segment spans residues 132-152 (LGVVLAAVVIITGCFSYYQEA). At 153–288 (KSSKIMESFK…GGQTPIAAEI (136 aa)) the chain is on the cytoplasmic side. Positions 216–235 (SSLTGESEPQTRSPDFTNEN) are disordered. Residue S228 is modified to Phosphoserine. Y260 carries the phosphotyrosine modification. Residues 289 to 308 (EHFIHIITGVAVFLGVSFFI) form a helical membrane-spanning segment. Over 309 to 320 (LSLILEYTWLEA) the chain is Extracellular. Residues 321 to 338 (VIFLIGIIVANVPEGLLA) form a helical membrane-spanning segment. Residues 339-772 (TVTVCLTLTA…EEGRLIFDNL (434 aa)) are Cytoplasmic-facing. The active-site 4-aspartylphosphate intermediate is D376. S452 and S484 each carry phosphoserine. An ATP-binding site is contributed by K487. The residue at position 542 (Y542) is a Phosphotyrosine. The segment at 596–717 (RAAVPDAVGK…QGAIVAVTGD (122 aa)) is mediates interaction with SCN7A. K661 is subject to N6-succinyllysine. Phosphoserine is present on residues S668 and S675. D717 and D721 together coordinate Mg(2+). The chain crosses the membrane as a helical span at residues 773–792 (KKSIAYTLTSNIPEITPFLI). Topologically, residues 793–802 (FIIANIPLPL) are extracellular. The helical transmembrane segment at 803–823 (GTVTILCIDLGTDMVPAISLA) threads the bilayer. At 824–843 (YEQAESDIMKRQPRNPKTDK) the chain is on the cytoplasmic side. Residues 844 to 866 (LVNERLISMAYGQIGMIQALGGF) traverse the membrane as a helical segment. Residues 867-918 (FTYFVILAENGFLPFHLLGIRVDWDDRWINDVEDSYGQQWTYEQRKIVEFTC) lie on the Extracellular side of the membrane. The helical transmembrane segment at 919-938 (HTAFFVSIVVVQWADLVICK) threads the bilayer. At 939 to 951 (TRRNSVFQQGMKN) the chain is on the cytoplasmic side. Residue S943 is modified to Phosphoserine; by PKA. Residues 952–970 (KILIFGLFEETALAAFLSY) traverse the membrane as a helical segment. Residues 971–985 (CPGMGVALRMYPLKP) are Extracellular-facing. The chain crosses the membrane as a helical span at residues 986–1006 (TWWFCAFPYSLLIFVYDEIRK). Residues 1007–1023 (LIIRRRPGGWVEKETYY) lie on the Cytoplasmic side of the membrane.

Belongs to the cation transport ATPase (P-type) (TC 3.A.3) family. Type IIC subfamily. In terms of assembly, the sodium/potassium-transporting ATPase is composed of a catalytic alpha subunit, an auxiliary non-catalytic beta subunit and an additional regulatory subunit. Interacts with regulatory subunit FXYD1. Interacts with regulatory subunit FXYD3. Interacts with SIK1. Interacts with SLC35G1 and STIM1. Interacts with CLN3; this interaction regulates the sodium/potassium-transporting ATPase complex localization at the plasma membrane. Interacts with SCN7A; activates ATP1A1 P-type sodium:potassium-exchanging transporter activity which indirectly signals to nearby neurons to regulate sodium homeostasis. Post-translationally, phosphorylation on Tyr-10 modulates pumping activity. Phosphorylation of Ser-943 by PKA modulates the response of ATP1A1 to PKC. Dephosphorylation by protein phosphatase 2A (PP2A) following increases in intracellular sodium, leading to increase catalytic activity. Expressed in endocardial endothelial cells.

The protein resides in the cell membrane. It localises to the basolateral cell membrane. It is found in the sarcolemma. Its subcellular location is the cell projection. The protein localises to the axon. The protein resides in the melanosome. The enzyme catalyses K(+)(out) + Na(+)(in) + ATP + H2O = K(+)(in) + Na(+)(out) + ADP + phosphate + H(+). In terms of biological role, this is the catalytic component of the active enzyme, which catalyzes the hydrolysis of ATP coupled with the exchange of sodium and potassium ions across the plasma membrane. This action creates the electrochemical gradient of sodium and potassium ions, providing the energy for active transport of various nutrients. Could also be part of an osmosensory signaling pathway that senses body-fluid sodium levels and controls salt intake behavior as well as voluntary water intake to regulate sodium homeostasis. This chain is Sodium/potassium-transporting ATPase subunit alpha-1 (ATP1A1), found in Oryctolagus cuniculus (Rabbit).